Here is a 283-residue protein sequence, read N- to C-terminus: Probable protein phosphatase 2C 17 (283 aa).

The region spanning 32 to 282 is the PPM-type phosphatase domain; it reads KYGFSLIKGK…DDISCIVVRF (251 aa). Mn(2+) is bound by residues D69, G70, D234, and D273.

This sequence belongs to the PP2C family. Mg(2+) is required as a cofactor. It depends on Mn(2+) as a cofactor.

It catalyses the reaction O-phospho-L-seryl-[protein] + H2O = L-seryl-[protein] + phosphate. It carries out the reaction O-phospho-L-threonyl-[protein] + H2O = L-threonyl-[protein] + phosphate. The sequence is that of Probable protein phosphatase 2C 17 from Arabidopsis thaliana (Mouse-ear cress).